The chain runs to 460 residues: DL-alanine permease SerP2 (460 aa).

The next 12 helical transmembrane spans lie at 26-46 (LIAIAGTIGTGLFLGAGKSIH), 47-67 (LTGPSIIFVYLIIGALMYILL), 98-118 (FIQWSYLLVVVFVAMAELIAI), 124-144 (FWLPDLPIWMTEVFVLVLLTL), 160-180 (FGMIKIVAIIGLILTAIILIF), 209-229 (FFESFQMVMFAFVSMEFIGMT), 246-266 (QIPIRIVLFYIGALLAIMSIY), 278-298 (FVTIFQLIGIKWAAALVNFVV), 344-364 (ALLFTSLLILFTPFISMIPAI), 368-388 (FVFITSVATNLFLVVYLMTLI), 410-430 (HIFIPLAIAGFVLIFISLFCF), and 433-453 (TIIPAIGSVIWVLIFGLFTFF).

Belongs to the amino acid-polyamine-organocation (APC) superfamily. Amino acid transporter (AAT) (TC 2.A.3.1) family.

Its subcellular location is the cell membrane. In terms of biological role, transports DL-alanine, DL-serine and glycine. The preferred substrate is DL-alanine. L-serine is a low-affinity substrate. This Lactococcus lactis subsp. cremoris (strain MG1363) protein is DL-alanine permease SerP2.